The chain runs to 154 residues: Large ribosomal subunit protein uL13 (154 aa).

A disordered region spans residues 132–154; that stretch reads PHEAQQPEVLDVKSMNAKNTRSA.

Belongs to the universal ribosomal protein uL13 family. Part of the 50S ribosomal subunit.

Functionally, this protein is one of the early assembly proteins of the 50S ribosomal subunit, although it is not seen to bind rRNA by itself. It is important during the early stages of 50S assembly. The sequence is that of Large ribosomal subunit protein uL13 from Paracoccus denitrificans (strain Pd 1222).